The following is a 199-amino-acid chain: Holliday junction branch migration complex subunit RuvA (199 aa).

The tract at residues 1–64 (MIGRITGILL…EDGHFLYGFA (64 aa)) is domain I. The interval 65-143 (SADERAAFRQ…RALPGFGAST (79 aa)) is domain II. Positions 144–152 (VPGAAAQPA) are flexible linker. The segment at 152 to 199 (ADSRSDILNALLALGYSDKEAQSALKAIPPETGVSDGIRQALKLLSKA) is domain III.

The protein belongs to the RuvA family. In terms of assembly, homotetramer. Forms an RuvA(8)-RuvB(12)-Holliday junction (HJ) complex. HJ DNA is sandwiched between 2 RuvA tetramers; dsDNA enters through RuvA and exits via RuvB. An RuvB hexamer assembles on each DNA strand where it exits the tetramer. Each RuvB hexamer is contacted by two RuvA subunits (via domain III) on 2 adjacent RuvB subunits; this complex drives branch migration. In the full resolvosome a probable DNA-RuvA(4)-RuvB(12)-RuvC(2) complex forms which resolves the HJ.

It is found in the cytoplasm. In terms of biological role, the RuvA-RuvB-RuvC complex processes Holliday junction (HJ) DNA during genetic recombination and DNA repair, while the RuvA-RuvB complex plays an important role in the rescue of blocked DNA replication forks via replication fork reversal (RFR). RuvA specifically binds to HJ cruciform DNA, conferring on it an open structure. The RuvB hexamer acts as an ATP-dependent pump, pulling dsDNA into and through the RuvAB complex. HJ branch migration allows RuvC to scan DNA until it finds its consensus sequence, where it cleaves and resolves the cruciform DNA. In Aromatoleum aromaticum (strain DSM 19018 / LMG 30748 / EbN1) (Azoarcus sp. (strain EbN1)), this protein is Holliday junction branch migration complex subunit RuvA.